A 193-amino-acid chain; its full sequence is Probable nicotinate-nucleotide adenylyltransferase (193 aa).

It belongs to the NadD family.

The enzyme catalyses nicotinate beta-D-ribonucleotide + ATP + H(+) = deamido-NAD(+) + diphosphate. It functions in the pathway cofactor biosynthesis; NAD(+) biosynthesis; deamido-NAD(+) from nicotinate D-ribonucleotide: step 1/1. Catalyzes the reversible adenylation of nicotinate mononucleotide (NaMN) to nicotinic acid adenine dinucleotide (NaAD). This is Probable nicotinate-nucleotide adenylyltransferase from Flavobacterium johnsoniae (strain ATCC 17061 / DSM 2064 / JCM 8514 / BCRC 14874 / CCUG 350202 / NBRC 14942 / NCIMB 11054 / UW101) (Cytophaga johnsonae).